The following is an 88-amino-acid chain: Small ribosomal subunit protein bS20 (88 aa).

Positions 1-27 (MANSKTAKKRAIQSEKRRQHNASRRSM) are disordered.

The protein belongs to the bacterial ribosomal protein bS20 family.

In terms of biological role, binds directly to 16S ribosomal RNA. The polypeptide is Small ribosomal subunit protein bS20 (Shewanella amazonensis (strain ATCC BAA-1098 / SB2B)).